A 185-amino-acid polypeptide reads, in one-letter code: Large ribosomal subunit protein uL5 (185 aa).

It belongs to the universal ribosomal protein uL5 family. Part of the 50S ribosomal subunit; part of the 5S rRNA/L5/L18/L25 subcomplex. Contacts the 5S rRNA and the P site tRNA. Forms a bridge to the 30S subunit in the 70S ribosome.

This is one of the proteins that bind and probably mediate the attachment of the 5S RNA into the large ribosomal subunit, where it forms part of the central protuberance. In the 70S ribosome it contacts protein S13 of the 30S subunit (bridge B1b), connecting the 2 subunits; this bridge is implicated in subunit movement. Contacts the P site tRNA; the 5S rRNA and some of its associated proteins might help stabilize positioning of ribosome-bound tRNAs. This is Large ribosomal subunit protein uL5 from Brucella abortus (strain 2308).